A 155-amino-acid polypeptide reads, in one-letter code: Ribonuclease H (155 aa).

Residues 1 to 142 enclose the RNase H type-1 domain; that stretch reads MLKQVEIFTD…CDELARAAAM (142 aa). Mg(2+) contacts are provided by Asp10, Glu48, Asp70, and Asp134.

The protein belongs to the RNase H family. As to quaternary structure, monomer. Mg(2+) serves as cofactor.

The protein localises to the cytoplasm. It catalyses the reaction Endonucleolytic cleavage to 5'-phosphomonoester.. Endonuclease that specifically degrades the RNA of RNA-DNA hybrids. This chain is Ribonuclease H, found in Salmonella paratyphi A (strain AKU_12601).